The sequence spans 288 residues: Bis(5'-nucleosyl)-tetraphosphatase, symmetrical (288 aa).

It belongs to the Ap4A hydrolase family.

It carries out the reaction P(1),P(4)-bis(5'-adenosyl) tetraphosphate + H2O = 2 ADP + 2 H(+). Hydrolyzes diadenosine 5',5'''-P1,P4-tetraphosphate to yield ADP. The sequence is that of Bis(5'-nucleosyl)-tetraphosphatase, symmetrical from Pseudomonas putida (strain W619).